We begin with the raw amino-acid sequence, 192 residues long: Transposon Tn552 DNA-invertase BinR (192 aa).

One can recognise a Resolvase/invertase-type recombinase catalytic domain in the interval 1–136 (MKIGYARVST…AGRIAARARG (136 aa)). The O-(5'-phospho-DNA)-serine intermediate role is filled by serine 9. The segment at residues 163–182 (IKTIAEQWKVSRTTIYRYLN) is a DNA-binding region (H-T-H motif).

Belongs to the site-specific recombinase resolvase family.

In terms of biological role, DNA-invertase, mediating the inversion of inv. This is Transposon Tn552 DNA-invertase BinR (resR) from Staphylococcus aureus.